The sequence spans 468 residues: ATP synthase subunit beta (468 aa).

155–162 (GGAGVGKT) contacts ATP.

It belongs to the ATPase alpha/beta chains family. As to quaternary structure, F-type ATPases have 2 components, CF(1) - the catalytic core - and CF(0) - the membrane proton channel. CF(1) has five subunits: alpha(3), beta(3), gamma(1), delta(1), epsilon(1). CF(0) has three main subunits: a(1), b(2) and c(9-12). The alpha and beta chains form an alternating ring which encloses part of the gamma chain. CF(1) is attached to CF(0) by a central stalk formed by the gamma and epsilon chains, while a peripheral stalk is formed by the delta and b chains.

The protein resides in the cell membrane. It catalyses the reaction ATP + H2O + 4 H(+)(in) = ADP + phosphate + 5 H(+)(out). Produces ATP from ADP in the presence of a proton gradient across the membrane. The catalytic sites are hosted primarily by the beta subunits. This chain is ATP synthase subunit beta, found in Streptococcus pneumoniae (strain CGSP14).